Consider the following 695-residue polypeptide: Pentatricopeptide repeat-containing protein 1, mitochondrial (695 aa).

PPR repeat units lie at residues 133-169 (TQYW…RLQP), 170-204 (LECN…DLEP), 205-243 (SDAT…NFQL), 244-278 (NLKT…GHAV), 279-315 (TEET…GIKP), and 316-352 (SRHG…TILL). Positions 391–416 (QKLEGPPALPEARVTSRTQPEVETTA) are disordered. 4 PPR repeats span residues 470–485 (EGFL…QPDI), 517–551 (DVTF…GIVP), 552–583 (NLRT…QVSP), and 584–618 (NIHI…SVPV). Residues 672–695 (WQEFQNKPVGDQDTTDKAGGLRDG) form a disordered region. The span at 685 to 695 (TTDKAGGLRDG) shows a compositional bias: basic and acidic residues.

It belongs to the PTCD1 family. Associates with mitochondrial leucine tRNAs. Interacts with ELAC2.

It localises to the mitochondrion. It is found in the mitochondrion matrix. In terms of biological role, mitochondrial protein implicated in negative regulation of leucine tRNA levels, as well as negative regulation of mitochondria-encoded proteins and COX activity. Also affects the 3'-processing of mitochondrial tRNAs. The protein is Pentatricopeptide repeat-containing protein 1, mitochondrial (Ptcd1) of Mus musculus (Mouse).